The sequence spans 144 residues: Snake venom vascular endothelial growth factor toxin VR-1 (144 aa).

The first 24 residues, 1–24 (MAAYLLAVAILFCIQGWPSGTVQG), serve as a signal peptide directing secretion. Q25 bears the Pyrrolidone carboxylic acid mark. 3 cysteine pairs are disulfide-bonded: C38–C80, C69–C115, and C73–C117. Over residues 120–134 (RWKQGEPEGPKEPRR) the composition is skewed to basic and acidic residues. The interval 120 to 144 (RWKQGEPEGPKEPRRGGVRAKFPFD) is disordered. A propeptide spanning residues 134–144 (RGGVRAKFPFD) is cleaved from the precursor.

The protein belongs to the PDGF/VEGF growth factor family. Snake venom VEGF subfamily. Homodimer; disulfide-linked. Interacts with VEGF receptor-2 (KDR) with high affinity, but not with VEGF receptor-1 (Flt-1), VEGF receptor-3 (FLT4), and neuropilin-1 (NRP1). As to expression, expressed by the venom gland.

The protein localises to the secreted. Functionally, snake venom VEGFs may contribute to venom dispersion and prey subjugation by inducing vascular permeability and hypotension. This protein induces angiogenesis probably through VEGF receptor (KDR/VEGFR-2) signaling, as well as drastic hypotension. The hypotension is mediated by nitric oxide, which is produced by VEGF-activated endothelium NO synthase. May also induce vascular permeability. The protein is Snake venom vascular endothelial growth factor toxin VR-1 of Daboia russelii (Russel's viper).